We begin with the raw amino-acid sequence, 544 residues long: CRISPR-associated endodeoxyribonuclease Cas12f2 (544 aa).

A recognition domain (REC) region spans residues 1–195 (MNMSKTTISV…KPNERETRYV (195 aa)). The interval 196 to 326 (HISKLESPSK…YLQYTYEAEV (131 aa)) is wedge domain (WED). A linker region spans residues 327–334 (EANKEYAG). Residues 335–485 (CLGVDIGCSK…VYVKPDYTSQ (151 aa)) form a ruvC-I region. Catalysis depends on residues aspartate 339 and glutamate 430. The tract at residues 486-520 (TCSSCGADKEKTERPSQAIFRCLNPTCRYYQRDIN) is target nucleic acid-binding (TNB). Residues cysteine 487, cysteine 490, cysteine 507, and cysteine 512 each coordinate Zn(2+). Residues 521–541 (ADFNAAVNIAKKALNNTEVVT) form a ruvC-II region. Aspartate 522 is an active-site residue.

This sequence belongs to the CRISPR-associated endonuclease Cas12f family. In terms of assembly, an asymmetric homodimer. Guide RNA is probably required for dimerization. It depends on Mg(2+) as a cofactor. Zn(2+) serves as cofactor.

CRISPR (clustered regularly interspaced short palindromic repeat), is an adaptive immune system that provides protection against mobile genetic elements (viruses, transposable elements and conjugative plasmids). CRISPR clusters contain sequences complementary to antecedent mobile elements and target invading nucleic acids. CRISPR clusters are transcribed and processed into CRISPR RNA (crRNA), which requires a trans-encoded small RNA (tracrRNA), but not this protein (in vitro). Recognizes a short motif in the CRISPR repeat sequences (the 5' PAM or protospacer adjacent motif, TTAT in this organism) to help distinguish self versus nonself, as targets within the CRISPR locus do not have PAMs. Upon expression in E.coli of this protein, a mini CRISPR array and the probable tracrRNA, has dsDNA endonuclease activity. DNA cleavage is centered around positions 21 base pairs 3' of PAM. The mini system does not protect E.coli against transformation by foreign plasmids. In Micrarchaeota archaeon (strain CG1_02_47_40), this protein is CRISPR-associated endodeoxyribonuclease Cas12f2.